The sequence spans 1263 residues: Multidrug resistance protein sirA (1263 aa).

The tract at residues M1 to D21 is disordered. Helical transmembrane passes span L57–I77, I104–N124, K179–V199, and F206–M226. The ABC transmembrane type-1 1 domain occupies L57–L347. A glycan (N-linked (GlcNAc...) asparagine) is linked at N232. Helical transmembrane passes span V284–I304 and V318–V338. Residues I380–R625 enclose the ABC transporter 1 domain. The N-linked (GlcNAc...) asparagine glycan is linked to N384. Position 415–422 (G415–S422) interacts with ATP. A glycan (N-linked (GlcNAc...) asparagine) is linked at N469. A disordered region spans residues P635 to K672. The next 6 membrane-spanning stretches (helical) occupy residues V699–F719, F740–G760, V817–V839, L843–V865, L930–V950, and F960–F980. One can recognise an ABC transmembrane type-1 2 domain in the interval V699–K986. The ABC transporter 2 domain occupies V1021 to L1259. G1056–S1063 is a binding site for ATP.

It belongs to the ABC transporter superfamily. ABCB family. Multidrug resistance exporter (TC 3.A.1.201) subfamily.

Its subcellular location is the cell membrane. It catalyses the reaction ATP + H2O + xenobioticSide 1 = ADP + phosphate + xenobioticSide 2.. Its function is as follows. Sirodesmin transporter that provides the dual role of sirodesmin export and self-protection. Also provides tolerance to gliotoxin. The protein is Multidrug resistance protein sirA of Leptosphaeria maculans (Blackleg fungus).